The primary structure comprises 418 residues: Serine--tRNA ligase (418 aa).

232-234 serves as a coordination point for L-serine; the sequence is TAE. Residues 263–265 and V279 each bind ATP; that span reads RRE. Residue E286 coordinates L-serine. 350–353 serves as a coordination point for ATP; it reads EISS. An L-serine-binding site is contributed by S385.

It belongs to the class-II aminoacyl-tRNA synthetase family. Type-1 seryl-tRNA synthetase subfamily. In terms of assembly, homodimer. The tRNA molecule binds across the dimer.

Its subcellular location is the cytoplasm. The enzyme catalyses tRNA(Ser) + L-serine + ATP = L-seryl-tRNA(Ser) + AMP + diphosphate + H(+). It catalyses the reaction tRNA(Sec) + L-serine + ATP = L-seryl-tRNA(Sec) + AMP + diphosphate + H(+). Its pathway is aminoacyl-tRNA biosynthesis; selenocysteinyl-tRNA(Sec) biosynthesis; L-seryl-tRNA(Sec) from L-serine and tRNA(Sec): step 1/1. In terms of biological role, catalyzes the attachment of serine to tRNA(Ser). Is also able to aminoacylate tRNA(Sec) with serine, to form the misacylated tRNA L-seryl-tRNA(Sec), which will be further converted into selenocysteinyl-tRNA(Sec). The polypeptide is Serine--tRNA ligase (Leptospira biflexa serovar Patoc (strain Patoc 1 / Ames)).